A 195-amino-acid chain; its full sequence is Peroxiredoxin (195 aa).

The Thioredoxin domain occupies 4–162 (AMIGKPAPEF…TLRLVQAFQF (159 aa)). The Cysteine sulfenic acid (-SOH) intermediate role is filled by C49.

The protein belongs to the peroxiredoxin family. AhpC/Prx1 subfamily. In terms of assembly, homodimer; disulfide-linked, upon oxidation.

It carries out the reaction a hydroperoxide + [thioredoxin]-dithiol = an alcohol + [thioredoxin]-disulfide + H2O. Its function is as follows. Thiol-specific peroxidase that catalyzes the reduction of hydrogen peroxide and organic hydroperoxides to water and alcohols, respectively. Plays a role in cell protection against oxidative stress by detoxifying peroxides and as sensor of hydrogen peroxide-mediated signaling events. This chain is Peroxiredoxin, found in Ascaris suum (Pig roundworm).